A 382-amino-acid chain; its full sequence is Galactokinase (382 aa).

Substrate is bound at residue 34–37 (EHTD). 124-130 (GAGLSSS) contacts ATP. Mg(2+) is bound by residues S130 and E162. D174 serves as the catalytic Proton acceptor. Y223 contributes to the substrate binding site.

Belongs to the GHMP kinase family. GalK subfamily.

Its subcellular location is the cytoplasm. The catalysed reaction is alpha-D-galactose + ATP = alpha-D-galactose 1-phosphate + ADP + H(+). Its pathway is carbohydrate metabolism; galactose metabolism. Functionally, catalyzes the transfer of the gamma-phosphate of ATP to D-galactose to form alpha-D-galactose-1-phosphate (Gal-1-P). The sequence is that of Galactokinase from Salmonella typhi.